The following is a 1256-amino-acid chain: MQLKIMPKKKHLSAGGVPLILFLCQMISALDVPLDLVQPPTITQQSPKDYIIDPRENIVIQCEAKGKPPPSFSWTRNGTHFDIDKDPLVTMKPGSGTLVINIMSEGKAETYEGVYQCTARNERGAAVSNNIVVRPSRSPLWTKERLEPIVLQNGQSLVLPCRPPIGLPPAIIFWMDNSFQRLPQSERVSQGLNGDLYFSNVLPEDTREDYICYARFNHTQTIQQKQPISLKVISVDELNDTIAANLSDTEFYGAKSSKERPPTFLTPEGNESHKEELRGNVLSLECIAEGLPTPIIYWIKEDGMLPANRTFYRNFKKTLQITHVSEADSGNYQCIAKNALGAVHHTISVTVKAAPYWIVAPQNLVLSPGENGTLICRANGNPKPRISWLTNGVPIEIALDDPSRKIDGDTIIFSNVQESSSAVYQCNASNKYGYLLANAFVNVLAEPPRILTSANTLYQVIANRPALLDCAFFGSPMPTIEWFKGTKGSALHEDIYVLHDNGTLEIPVAQKDSTGTYTCVARNKLGMAKNEVHLEIKDPTRIIKQPEYAVVQRGSKVSFECRVKHDHTLIPTIMWLKDNGELPNDERFSTDKDHLVVSDVKDDDGGTYTCTANTTLDSASASAVLRVVAPTPTPAPIYDVPNPPFDLELTNQLDKSVQLTWTPGDDNNSPITKFIIEYEDAMHDAGLWRHQAEVSGTQTTAQLKLSPYVNYSFRVMAENSIGRSMPSEASEQYLTKAAEPDQNPMAVEGLGTEPDNLVITWKPLNGFQSNGPGLQYKVSWRQKDGDDEWTSVVVANVSKYIVSGTPTFVPYLIKVQALNDVGFAPEPAAVMGHSGEDLPMVAPGNVRVSVVNSTLAEVHWDPVPPKSVRGHLQGYRIYYWKTQSSSKRNRRHIEKKILTFQGTKTHGMLPGLQPYSHYALNVRVVNGKGEGPASTDRGFHTPEGVPSAPSSLKIVNPTLDSLTLEWDPPSHPNGILTEYILQYQPINSTHELGPLVDLKIPANKTRWTLKNLNFSTRYKFYFYAQTSVGPGSQITEEAITTVDEAGIPPPDVGAGKGKEEWRKEIVNGSRSFFGLKGLMPGTAYKVRVGAEGDSGFVSSEDVFETGPAMASRQVDIATQGWFIGLMCAVALLILILLIVCFIRRNKGGKYPVKEKEDAHADPEIQPMKEDDGTFGEYSDAEDHKPLKKGSRTPSDRTVKKEDSDDSLVDYGEGVNGQFNEDGSFIGQYSGKKEKEPAEGNESSEAPSPVNAMNSFV.

Residues methionine 1–alanine 29 form the signal peptide. Residues leucine 30–glutamine 1119 are Extracellular-facing. Ig-like C2-type domains lie at proline 40–serine 128 and proline 135–serine 229. Disulfide bonds link cysteine 62–cysteine 117 and cysteine 161–cysteine 212. Asparagine 77 is a glycosylation site (N-linked (GlcNAc...) asparagine). Asparagine 217, asparagine 239, asparagine 245, asparagine 270, asparagine 308, and asparagine 371 each carry an N-linked (GlcNAc...) asparagine glycan. Ig-like C2-type domains lie at proline 261–threonine 350, proline 355–asparagine 442, proline 448–glutamate 535, and proline 539–arginine 626. Residues cysteine 286 and cysteine 334 are joined by a disulfide bond. Cysteine 376 and cysteine 426 form a disulfide bridge. N-linked (GlcNAc...) asparagine glycans are attached at residues asparagine 427 and asparagine 501. 2 disulfide bridges follow: cysteine 470–cysteine 519 and cysteine 561–cysteine 610. 8 N-linked (GlcNAc...) asparagine glycosylation sites follow: asparagine 613, asparagine 710, asparagine 796, asparagine 852, asparagine 987, asparagine 1003, asparagine 1013, and asparagine 1067. 4 Fibronectin type-III domains span residues proline 643–alanine 738, proline 740–aspartate 837, alanine 842–glycine 944, and alanine 948–alanine 1045. The chain crosses the membrane as a helical span at residues glycine 1120–isoleucine 1142. At arginine 1143 to valine 1256 the chain is on the cytoplasmic side. Residues proline 1151–aspartate 1171 show a composition bias toward basic and acidic residues. The interval proline 1151 to valine 1256 is disordered. Threonine 1173 is subject to Phosphothreonine. Position 1177 is a phosphotyrosine (tyrosine 1177). Serine 1178 bears the Phosphoserine mark. Over residues proline 1193–aspartate 1202 the composition is skewed to basic and acidic residues. Phosphoserine is present on residues serine 1203, serine 1206, serine 1223, serine 1242, serine 1243, and serine 1247. Polar residues predominate over residues asparagine 1240–valine 1256.

This sequence belongs to the immunoglobulin superfamily. L1/neurofascin/NgCAM family. In terms of assembly, constituent of a NFASC/NRCAM/ankyrin-G complex. Detected in a complex with CNTN1 and PTPRB. Interacts with GLDN/gliomedin and MYOC. As to expression, detected in sciatic nerve. Detected in brain, especially in the cerebellum Purkinje cell layer, inner granule cell layer and molecular layer (at protein level). Detected in neurons and Schwann cells.

Its subcellular location is the cell membrane. It localises to the cell projection. The protein localises to the axon. It is found in the secreted. Its function is as follows. Cell adhesion protein that is required for normal responses to cell-cell contacts in brain and in the peripheral nervous system. Plays a role in neurite outgrowth in response to contactin binding. Plays a role in mediating cell-cell contacts between Schwann cells and axons. Plays a role in the formation and maintenance of the nodes of Ranvier on myelinated axons. Nodes of Ranvier contain clustered sodium channels that are crucial for the saltatory propagation of action potentials along myelinated axons. During development, nodes of Ranvier are formed by the fusion of two heminodes. Required for normal clustering of sodium channels at heminodes; not required for the formation of mature nodes with normal sodium channel clusters. Required, together with GLDN, for maintaining NFASC and sodium channel clusters at mature nodes of Ranvier. The sequence is that of Neuronal cell adhesion molecule (Nrcam) from Mus musculus (Mouse).